A 171-amino-acid chain; its full sequence is Orotate phosphoribosyltransferase (171 aa).

Residues arginine 85, lysine 86, arginine 88, histidine 90, and glutamate 110–serine 118 contribute to the 5-phospho-alpha-D-ribose 1-diphosphate site. Residues threonine 114 and arginine 142 each coordinate orotate.

Belongs to the purine/pyrimidine phosphoribosyltransferase family. PyrE subfamily. In terms of assembly, homodimer. It depends on Mg(2+) as a cofactor.

The catalysed reaction is orotidine 5'-phosphate + diphosphate = orotate + 5-phospho-alpha-D-ribose 1-diphosphate. The protein operates within pyrimidine metabolism; UMP biosynthesis via de novo pathway; UMP from orotate: step 1/2. Functionally, catalyzes the transfer of a ribosyl phosphate group from 5-phosphoribose 1-diphosphate to orotate, leading to the formation of orotidine monophosphate (OMP). The sequence is that of Orotate phosphoribosyltransferase from Thermoplasma acidophilum (strain ATCC 25905 / DSM 1728 / JCM 9062 / NBRC 15155 / AMRC-C165).